We begin with the raw amino-acid sequence, 337 residues long: MRAVFIQGAEEHPAAFCYQVNGSCPRTVHTLGIQLVIYLACAAGMLIIVLGNVFVAFAVSYFKALHTPTNFLLLSLALADMFLGLLVLPLSTIRSVESCWFFGDFLCRLHTYLDTLFCLTSIFHLCFISIDRHCAICDPLLYPSKFTVRVALRYILAGWGVPAAYTSLFLYTDVVETRLSQWLEEMPCVGSCQLLLNKFWGWLNFPLFFVPCLIMISLYVKIFVVATRQAQQITTLSKSLAGAAKHERKAAKTLGIAVGIYLLCWLPFTIDTMVDSLLHFITPPLVFDIFIWFAYFNSACNPIIYVFSYQWFRKALKLTLSQKVFSPQTRTVDLYQE.

Residues 1 to 34 lie on the Extracellular side of the membrane; it reads MRAVFIQGAEEHPAAFCYQVNGSCPRTVHTLGIQ. Residue Asn-21 is glycosylated (N-linked (GlcNAc...) asparagine). Disulfide bonds link Cys-24-Cys-188 and Cys-99-Cys-192. The helical transmembrane segment at 35–55 threads the bilayer; the sequence is LVIYLACAAGMLIIVLGNVFV. The Cytoplasmic segment spans residues 56 to 70; it reads AFAVSYFKALHTPTN. Residues 71–91 traverse the membrane as a helical segment; sequence FLLLSLALADMFLGLLVLPLS. Topologically, residues 92 to 109 are extracellular; sequence TIRSVESCWFFGDFLCRL. Residues 110-130 form a helical membrane-spanning segment; that stretch reads HTYLDTLFCLTSIFHLCFISI. At 131–154 the chain is on the cytoplasmic side; sequence DRHCAICDPLLYPSKFTVRVALRY. A helical transmembrane segment spans residues 155 to 175; that stretch reads ILAGWGVPAAYTSLFLYTDVV. Residues 176–189 form an extracellular Loop 2 (ECL2) region; the sequence is ETRLSQWLEEMPCV. Residues 176 to 204 are Extracellular-facing; that stretch reads ETRLSQWLEEMPCVGSCQLLLNKFWGWLN. Residues 205 to 225 form a helical membrane-spanning segment; sequence FPLFFVPCLIMISLYVKIFVV. Residues 226–253 lie on the Cytoplasmic side of the membrane; the sequence is ATRQAQQITTLSKSLAGAAKHERKAAKT. A helical membrane pass occupies residues 254-274; the sequence is LGIAVGIYLLCWLPFTIDTMV. Residues 275-284 are Extracellular-facing; that stretch reads DSLLHFITPP. Residues 285–307 form a helical membrane-spanning segment; that stretch reads LVFDIFIWFAYFNSACNPIIYVF. Topologically, residues 308-337 are cytoplasmic; sequence SYQWFRKALKLTLSQKVFSPQTRTVDLYQE.

This sequence belongs to the G-protein coupled receptor 1 family. As to expression, expressed almost exclusively in skeletal muscle and selected areas of the brain, such amygdala, hippocampus, caudate nucleus, thalamus and hypothalamus. Weak expression is also find in substantia nigra.

Its subcellular location is the cell membrane. Olfactory receptor specific for trimethylamine, a trace amine. Also activated at lower level by dimethylethylamine. Trimethylamine is a bacterial metabolite found in some animal odors, and to humans it is a repulsive odor associated with bad breath and spoiled food. Trimethylamine-binding causes a conformation change that triggers signaling via G(s)-class of G alpha proteins (GNAL or GNAS). This is Trace amine-associated receptor 5 from Homo sapiens (Human).